Reading from the N-terminus, the 369-residue chain is Type 2 DNA topoisomerase 6 subunit A (369 aa).

A Topo IIA-type catalytic domain is found at 11-149 (QRDLLAREKL…FHMRPEEDGA (139 aa)). Y106 (O-(5'-phospho-DNA)-tyrosine intermediate) is an active-site residue. 2 residues coordinate Mg(2+): E202 and D254.

Belongs to the TOP6A family. In terms of assembly, homodimer. Heterotetramer of two Top6A and two Top6B chains. Mg(2+) is required as a cofactor.

The catalysed reaction is ATP-dependent breakage, passage and rejoining of double-stranded DNA.. Relaxes both positive and negative superturns and exhibits a strong decatenase activity. The polypeptide is Type 2 DNA topoisomerase 6 subunit A (Methanosarcina barkeri (strain Fusaro / DSM 804)).